Reading from the N-terminus, the 156-residue chain is Small ribosomal subunit protein uS7 (156 aa).

Belongs to the universal ribosomal protein uS7 family. As to quaternary structure, part of the 30S ribosomal subunit. Contacts proteins S9 and S11.

In terms of biological role, one of the primary rRNA binding proteins, it binds directly to 16S rRNA where it nucleates assembly of the head domain of the 30S subunit. Is located at the subunit interface close to the decoding center, probably blocks exit of the E-site tRNA. The protein is Small ribosomal subunit protein uS7 of Klebsiella pneumoniae subsp. pneumoniae (strain ATCC 700721 / MGH 78578).